Reading from the N-terminus, the 494-residue chain is Cytochrome P450 2C44 (494 aa).

The signal sequence occupies residues 1 to 25; it reads MELLGLPTLALLVLVMSLSLLSVWT. The residue at position 131 (Ser-131) is a Phosphoserine. N6-acetyllysine is present on residues Lys-253 and Lys-379. Cys-439 lines the heme pocket.

Belongs to the cytochrome P450 family. The cofactor is heme. Highly expressed in liver, particularly in hepatocytes and bile duct epithelial cells (at protein level). Expressed in nephron segments. Prominent expression is detected in proximal tubules at the corticomedullary junction (at protein level). Also expressed in renal cortical collecting duct. Lower expression levels are detected in adrenal glands.

It is found in the endoplasmic reticulum membrane. The protein localises to the microsome membrane. The catalysed reaction is (5Z,8Z,11Z,14Z)-eicosatetraenoate + reduced [NADPH--hemoprotein reductase] + O2 = (8R,9S)-epoxy-(5Z,11Z,14Z)-eicosatrienoate + oxidized [NADPH--hemoprotein reductase] + H2O + H(+). The enzyme catalyses (5Z,8Z,11Z,14Z)-eicosatetraenoate + reduced [NADPH--hemoprotein reductase] + O2 = (11R,12S)-epoxy-(5Z,8Z,14Z)-eicosatrienoate + oxidized [NADPH--hemoprotein reductase] + H2O + H(+). It carries out the reaction (5Z,8Z,11Z,14Z)-eicosatetraenoate + reduced [NADPH--hemoprotein reductase] + O2 = 14,15-epoxy-(5Z,8Z,11Z)-eicosatrienoate + oxidized [NADPH--hemoprotein reductase] + H2O + H(+). It catalyses the reaction (5Z,8Z,11Z,14Z,17Z)-eicosapentaenoate + reduced [NADPH--hemoprotein reductase] + O2 = 8,9-epoxy-(5Z,11Z,14Z,17Z)-eicosatetraenoate + oxidized [NADPH--hemoprotein reductase] + H2O + H(+). The catalysed reaction is (5Z,8Z,11Z,14Z,17Z)-eicosapentaenoate + reduced [NADPH--hemoprotein reductase] + O2 = 11,12-epoxy-(5Z,8Z,14Z,17Z)-eicosatetraenoate + oxidized [NADPH--hemoprotein reductase] + H2O + H(+). The enzyme catalyses (5Z,8Z,11Z,14Z,17Z)-eicosapentaenoate + reduced [NADPH--hemoprotein reductase] + O2 = 14,15-epoxy-(5Z,8Z,11Z,17Z)-eicosatetraenoate + oxidized [NADPH--hemoprotein reductase] + H2O + H(+). It carries out the reaction (5Z,8Z,11Z,14Z,17Z)-eicosapentaenoate + reduced [NADPH--hemoprotein reductase] + O2 = (17R,18S)-epoxy-(5Z,8Z,11Z,14Z)-eicosatetraenoate + oxidized [NADPH--hemoprotein reductase] + H2O + H(+). It catalyses the reaction (5Z,8Z,11Z,14Z,17Z)-eicosapentaenoate + reduced [NADPH--hemoprotein reductase] + O2 = (17S,18R)-epoxy-(5Z,8Z,11Z,14Z)-eicosatetraenoate + oxidized [NADPH--hemoprotein reductase] + H2O + H(+). The catalysed reaction is 20-hydroxy-(5Z,8Z,11Z,14Z)-eicosatetraenoate + reduced [NADPH--hemoprotein reductase] + O2 = 20-hydroxy-8,9-epoxy-(5Z,11Z,14Z)-eicosatrienoate + oxidized [NADPH--hemoprotein reductase] + H2O + H(+). It participates in lipid metabolism; arachidonate metabolism. Functionally, a cytochrome P450 monooxygenase involved in polyunsaturated fatty acids (PUFAs) metabolism and signaling. Catalyzes preferentially the epoxidation of double bonds of PUFAs. Converts arachidonic acid (ARA, C20:4(n-6)) primarily to stereospecific products 8R,9S-epoxyeicosatrienoate (EET) and 11R,12S-EET. Plays a major role in the formation of EETs and hydroxy-EETs (HEETs) in kidney. Via EETs may inhibit the epithelial sodium channels (ENaCs) in nephron segments, preventing excessive sodium absorption during high dietary salt intake. Participates in the formation of anti-inflammatory hydroxyepoxyeicosatrienoic acids (HEETs) by converting 20-hydroxyeicosatetraenoic acid (20-HETE) to 20,8,9-HEET, an activator of PPARA. Metabolizes eicosapentaenoic acid (EPA, C20:5(n-3)) to epoxyeicosatetraenoic acid (EETeTr) regioisomers, 8,9-, 11,12-, 14,15-, and 17,18- EETeTr, preferentially producing 17R,18S enantiomer. Mechanistically, uses molecular oxygen inserting one oxygen atom into a substrate, and reducing the second into a water molecule, with two electrons provided by NADPH via cytochrome P450 reductase (CPR; NADPH-ferrihemoprotein reductase). The polypeptide is Cytochrome P450 2C44 (Mus musculus (Mouse)).